Reading from the N-terminus, the 396-residue chain is Elongation factor Tu (396 aa).

In terms of domain architecture, tr-type G spans 10–206 (KPHCNIGTIG…TVDAYIPQPE (197 aa)). Positions 19–26 (GHVDHGKT) are G1. GTP is bound at residue 19–26 (GHVDHGKT). T26 lines the Mg(2+) pocket. The interval 60-64 (GITIS) is G2. The interval 81–84 (DCPG) is G3. Residues 81–85 (DCPGH) and 136–139 (NKVD) contribute to the GTP site. The tract at residues 136 to 139 (NKVD) is G4. Positions 174–176 (SAL) are G5.

It belongs to the TRAFAC class translation factor GTPase superfamily. Classic translation factor GTPase family. EF-Tu/EF-1A subfamily. Monomer.

It localises to the cytoplasm. The catalysed reaction is GTP + H2O = GDP + phosphate + H(+). GTP hydrolase that promotes the GTP-dependent binding of aminoacyl-tRNA to the A-site of ribosomes during protein biosynthesis. In Methylocella silvestris (strain DSM 15510 / CIP 108128 / LMG 27833 / NCIMB 13906 / BL2), this protein is Elongation factor Tu.